The primary structure comprises 157 residues: Protein UXT (157 aa).

Belongs to the UXT family. In terms of assembly, homohexamer. Component of the PAQosome complex which is responsible for the biogenesis of several protein complexes and which consists of R2TP complex members RUVBL1, RUVBL2, RPAP3 and PIH1D1, URI complex members PFDN2, PFDN6, PDRG1, UXT and URI1 as well as ASDURF, POLR2E and DNAAF10/WDR92. Interacts with LRPPRC. Interacts with androgen receptor AR (via N-terminus). Interacts with estrogen receptor ESR1; the interaction relocalizes ESR1 from the nucleus to the cytoplasm. In the nucleus, interacts specifically with RELA (via RHD domain) and forms a dynamic complex with NF-kappa-B and is recruited to the NF-kappa-B enhanceosome upon stimulation. Interacts with MECOM. Interacts with URI1. Part of complex I composed of TNF-alpha receptor TNFRSF1A, TRADD, TRAF2 and RIPK1 formed in response to TNF-alpha stimulation. Within the complex, interacts (via TPQE motif) with TRAF2; the interaction prevents the recruitment of FADD and CASP8/caspase 8 to complex I. Ubiquitinated by E3 ubiquitin-protein ligase complex containing FBXO7; leading to proteasomal degradation. Ubiquitous. Expressed in prostate epithelial cells. Expressed in mammary epithelial cells. Highest levels in the heart, skeletal muscle, pancreas, kidney, liver, adrenal gland, peripheral blood leukocytes, lymph node, prostate, and thyroid and the lowest levels in bladder and uterus. Overexpressed in a number of tumor tissues.

It is found in the cytoplasm. The protein localises to the nucleus. It localises to the cytoskeleton. The protein resides in the microtubule organizing center. Its subcellular location is the centrosome. It is found in the spindle pole. In terms of biological role, involved in gene transcription regulation. Acts in concert with the corepressor URI1 to regulate androgen receptor AR-mediated transcription. Together with URI1, associates with chromatin to the NKX3-1 promoter region. Negatively regulates the transcriptional activity of the estrogen receptor ESR1 by inducing its translocation into the cytoplasm. May act as nuclear chaperone that facilitates the formation of the NF-kappa-B enhanceosome and thus positively regulates NF-kappa-B transcription activity. Potential component of mitochondrial-associated LRPPRC, a multidomain organizer that potentially integrates mitochondria and the microtubular cytoskeleton with chromosome remodeling. Increasing concentrations of UXT contributes to progressive aggregation of mitochondria and cell death potentially through its association with LRPPRC. Suppresses cell transformation and it might mediate this function by interaction and inhibition of the biological activity of cell proliferation and survival stimulatory factors like MECOM. Plays a role in protecting cells against TNF-alpha-induced apoptosis by preventing the recruitment of FADD and caspase 8 to the apoptotic complex I, composed of TRADD, TRAF2 and RIPK1/RIP. The chain is Protein UXT (UXT) from Homo sapiens (Human).